The following is a 358-amino-acid chain: UDP-3-O-acylglucosamine N-acyltransferase (358 aa).

Catalysis depends on histidine 252, which acts as the Proton acceptor.

It belongs to the transferase hexapeptide repeat family. LpxD subfamily. As to quaternary structure, homotrimer.

The catalysed reaction is a UDP-3-O-[(3R)-3-hydroxyacyl]-alpha-D-glucosamine + a (3R)-hydroxyacyl-[ACP] = a UDP-2-N,3-O-bis[(3R)-3-hydroxyacyl]-alpha-D-glucosamine + holo-[ACP] + H(+). It functions in the pathway bacterial outer membrane biogenesis; LPS lipid A biosynthesis. In terms of biological role, catalyzes the N-acylation of UDP-3-O-acylglucosamine using 3-hydroxyacyl-ACP as the acyl donor. Is involved in the biosynthesis of lipid A, a phosphorylated glycolipid that anchors the lipopolysaccharide to the outer membrane of the cell. This Paraburkholderia phymatum (strain DSM 17167 / CIP 108236 / LMG 21445 / STM815) (Burkholderia phymatum) protein is UDP-3-O-acylglucosamine N-acyltransferase.